The chain runs to 392 residues: Galactokinase (392 aa).

40–43 is a binding site for substrate; that stretch reads EHID. ATP is bound by residues Ser-74 and 128-134; that span reads GSGLSSS. Positions 134 and 167 each coordinate Mg(2+). Asp-179 functions as the Proton acceptor in the catalytic mechanism. Tyr-229 lines the substrate pocket.

The protein belongs to the GHMP kinase family. GalK subfamily.

It localises to the cytoplasm. The enzyme catalyses alpha-D-galactose + ATP = alpha-D-galactose 1-phosphate + ADP + H(+). The protein operates within carbohydrate metabolism; galactose metabolism. In terms of biological role, catalyzes the transfer of the gamma-phosphate of ATP to D-galactose to form alpha-D-galactose-1-phosphate (Gal-1-P). The sequence is that of Galactokinase from Clostridium tetani (strain Massachusetts / E88).